The primary structure comprises 624 residues: Chaperone protein HtpG (624 aa).

The tract at residues 1-336 is a; substrate-binding; it reads MKGQETRGFQ…SSDLPLNVSR (336 aa). Residues 337–552 form a b region; sequence EILQDSTVTR…ADEMSTQMAK (216 aa). The interval 553 to 624 is c; sequence LFAAAGQKVP…IRRMNQLLVS (72 aa).

This sequence belongs to the heat shock protein 90 family. In terms of assembly, homodimer.

It is found in the cytoplasm. In terms of biological role, molecular chaperone. Has ATPase activity. The polypeptide is Chaperone protein HtpG (Escherichia coli O139:H28 (strain E24377A / ETEC)).